Consider the following 357-residue polypeptide: Uroporphyrinogen decarboxylase (357 aa).

Residues 27–31, aspartate 77, tyrosine 154, serine 209, and histidine 330 each bind substrate; that span reads RQAGR.

Belongs to the uroporphyrinogen decarboxylase family. Homodimer.

It localises to the cytoplasm. The catalysed reaction is uroporphyrinogen III + 4 H(+) = coproporphyrinogen III + 4 CO2. Its pathway is porphyrin-containing compound metabolism; protoporphyrin-IX biosynthesis; coproporphyrinogen-III from 5-aminolevulinate: step 4/4. In terms of biological role, catalyzes the decarboxylation of four acetate groups of uroporphyrinogen-III to yield coproporphyrinogen-III. The sequence is that of Uroporphyrinogen decarboxylase from Acinetobacter baumannii (strain ACICU).